Here is a 387-residue protein sequence, read N- to C-terminus: Alkanesulfonate monooxygenase (387 aa).

The protein belongs to the SsuD family.

It catalyses the reaction an alkanesulfonate + FMNH2 + O2 = an aldehyde + FMN + sulfite + H2O + 2 H(+). Functionally, catalyzes the desulfonation of aliphatic sulfonates. The protein is Alkanesulfonate monooxygenase of Ralstonia pickettii (strain 12J).